The following is a 517-amino-acid chain: Ribonuclease Y (517 aa).

Residues methionine 1–valine 21 traverse the membrane as a helical segment. Positions leucine 207–aspartate 273 constitute a KH domain. The HD domain maps to alanine 333–alanine 426.

The protein belongs to the RNase Y family.

It localises to the cell membrane. Endoribonuclease that initiates mRNA decay. This Campylobacter jejuni subsp. jejuni serotype O:23/36 (strain 81-176) protein is Ribonuclease Y.